Reading from the N-terminus, the 447-residue chain is ATP-dependent protease ATPase subunit HslU (447 aa).

Residues Ile18, 60–65 (GVGKTE), Asp259, Glu325, and Arg397 each bind ATP.

Belongs to the ClpX chaperone family. HslU subfamily. In terms of assembly, a double ring-shaped homohexamer of HslV is capped on each side by a ring-shaped HslU homohexamer. The assembly of the HslU/HslV complex is dependent on binding of ATP.

The protein resides in the cytoplasm. Functionally, ATPase subunit of a proteasome-like degradation complex; this subunit has chaperone activity. The binding of ATP and its subsequent hydrolysis by HslU are essential for unfolding of protein substrates subsequently hydrolyzed by HslV. HslU recognizes the N-terminal part of its protein substrates and unfolds these before they are guided to HslV for hydrolysis. The polypeptide is ATP-dependent protease ATPase subunit HslU (Burkholderia thailandensis (strain ATCC 700388 / DSM 13276 / CCUG 48851 / CIP 106301 / E264)).